The chain runs to 707 residues: Terpene cyclase/mutase atnI (707 aa).

Polar residues predominate over residues 1–20 (MGQHIASSESSTNGHVSLET). The disordered stretch occupies residues 1-22 (MGQHIASSESSTNGHVSLETNG). PFTB repeat units lie at residues 130 to 173 (AVEI…RLLG), 494 to 535 (LRDA…VGKT), 571 to 608 (TAQG…ETLA), and 620 to 661 (SRRG…VQTA).

The protein belongs to the terpene cyclase/mutase family.

Its pathway is secondary metabolite biosynthesis; terpenoid biosynthesis. Terpene cyclase/mutase; part of the gene cluster that mediates the biosynthesis of the meroterpenoids arthripenoids. The pathway begins with the HR-PKS atnH that catalyzes two chain-extension steps to form a reduced triketide, which then primes the SAT domain in the NR-PKS atnG to initiate three more cycles of extension to give a linear hexaketide corresponding to the polyketide part of arthripenoids. The FAD-dependent monooxygenase atnJ then performs an oxidative decarboxylation at C11 of the atnH/atnG product, via an electrophilic aromatic hydroxylation with concomitant ipso-decarboxylation. The membrane-bound polyprenyl transferase atnF then introduces a farnesyl group before the FAD-dependent monooxygenase atnK functions as the first epoxidase on terminal C12'-C13' olefin, followed by a second epoxidation on C7'-C8' catalyzed by atnA. The terpene cyclase/mutase atnI then initiates the sequential tricyclic ring formation through protonation of the terminal epoxide and catalyzes the regioselective and stereoselective 6/6/6-tricyclic ring formation. The cytochrome P450 monooxygenase atnM is responsible for hydroxylating both C1' and C10'. The next steps may involve ketoreduction and acetyl transfer by the ketoreductase atnB and the acetyltransferase atnC, and lead to the production of arthripenoid B, the final biosynthetic product of the atn cluster. The hydroquinone moiety in arthripenoid B is prone to undergo spontaneous oxidation to afford a benzoquinone compound, a key intermediate for generating structure diversity. For instance, addition of a cysteine followed by ring contraction gives arthripenoid A, tautomerization gives the main product arthripenoid C, addition of a molecular of water or amine affords arthripenoid D or E, respectively, and loss of one water forms arthripenoid F. The polypeptide is Terpene cyclase/mutase atnI (Arthrinium sp).